The primary structure comprises 239 residues: Ubiquinone biosynthesis O-methyltransferase (239 aa).

Positions 44, 63, 84, and 128 each coordinate S-adenosyl-L-methionine.

Belongs to the methyltransferase superfamily. UbiG/COQ3 family.

The catalysed reaction is a 3-demethylubiquinol + S-adenosyl-L-methionine = a ubiquinol + S-adenosyl-L-homocysteine + H(+). The enzyme catalyses a 3-(all-trans-polyprenyl)benzene-1,2-diol + S-adenosyl-L-methionine = a 2-methoxy-6-(all-trans-polyprenyl)phenol + S-adenosyl-L-homocysteine + H(+). Its pathway is cofactor biosynthesis; ubiquinone biosynthesis. Functionally, O-methyltransferase that catalyzes the 2 O-methylation steps in the ubiquinone biosynthetic pathway. In Xanthomonas campestris pv. campestris (strain 8004), this protein is Ubiquinone biosynthesis O-methyltransferase.